Consider the following 337-residue polypeptide: Putative 4-hydroxythreonine-4-phosphate dehydrogenase (337 aa).

Residues His-172, His-216, and His-271 each coordinate a divalent metal cation.

The protein belongs to the PdxA family. Homodimer. Zn(2+) serves as cofactor. The cofactor is Mg(2+). Requires Co(2+) as cofactor.

It is found in the cytoplasm. It carries out the reaction 4-(phosphooxy)-L-threonine + NAD(+) = 3-amino-2-oxopropyl phosphate + CO2 + NADH. It participates in cofactor biosynthesis; pyridoxine 5'-phosphate biosynthesis; pyridoxine 5'-phosphate from D-erythrose 4-phosphate: step 4/5. Functionally, catalyzes the NAD(P)-dependent oxidation of 4-(phosphooxy)-L-threonine (HTP) into 2-amino-3-oxo-4-(phosphooxy)butyric acid which spontaneously decarboxylates to form 3-amino-2-oxopropyl phosphate (AHAP). This chain is Putative 4-hydroxythreonine-4-phosphate dehydrogenase, found in Pasteurella multocida (strain Pm70).